The sequence spans 216 residues: Probable nicotinate-nucleotide adenylyltransferase (216 aa).

It belongs to the NadD family.

The catalysed reaction is nicotinate beta-D-ribonucleotide + ATP + H(+) = deamido-NAD(+) + diphosphate. Its pathway is cofactor biosynthesis; NAD(+) biosynthesis; deamido-NAD(+) from nicotinate D-ribonucleotide: step 1/1. Its function is as follows. Catalyzes the reversible adenylation of nicotinate mononucleotide (NaMN) to nicotinic acid adenine dinucleotide (NaAD). The polypeptide is Probable nicotinate-nucleotide adenylyltransferase (Geotalea uraniireducens (strain Rf4) (Geobacter uraniireducens)).